Reading from the N-terminus, the 603-residue chain is Penicillin-binding protein activator LpoA (603 aa).

The first 24 residues, 1–24, serve as a signal peptide directing secretion; that stretch reads MINHKRLSVPRILTPVALAITLAA. C25 is lipidated: N-palmitoyl cysteine. Residue C25 is the site of S-diacylglycerol cysteine attachment.

This sequence belongs to the LpoA family. Interacts with PBP1a.

It localises to the cell outer membrane. In terms of biological role, regulator of peptidoglycan synthesis that is essential for the function of penicillin-binding protein 1A (PBP1a). The chain is Penicillin-binding protein activator LpoA from Vibrio antiquarius (strain Ex25).